A 254-amino-acid polypeptide reads, in one-letter code: MAVGKNKRLSKGKKGLKKRVVDPFSKKEWYDIKAPSTFKNRNVGKTLVNRSAGLKSASDTLKGRVVEACLADLQGSEDHSFRKIKLRVDEVQGKNLLTNIHGMDFTTDKYRSMVRKWQTLIEAQVTVKTSDEYVIRVFAIAFTRKQPNQVKKTCYAQSSHIRAIRKVFSEILTREVQNSTLAQFTSKLIPEVINKEMENATKDIFPLQNVHVRKVKLLKQPKFDLGSLMALHGEGSDETGKKVSGFKDEILETV.

The residue at position 2 (alanine 2) is an N-acetylalanine; partial.

This sequence belongs to the eukaryotic ribosomal protein eS1 family. As to quaternary structure, component of the small ribosomal subunit. Mature ribosomes consist of a small (40S) and a large (60S) subunit. The 40S subunit contains about 33 different proteins and 1 molecule of RNA (18S). The 60S subunit contains about 49 different proteins and 3 molecules of RNA (25S, 5.8S and 5S).

It is found in the cytoplasm. This is Small ribosomal subunit protein eS1 from Zygosaccharomyces rouxii (strain ATCC 2623 / CBS 732 / NBRC 1130 / NCYC 568 / NRRL Y-229).